The sequence spans 290 residues: MSWLDKLLPPKIKQTDPKSRKGIPEGLWVKCPSCEAVLYRNDVDANLHVCPKCDHHMRIGARERLDALLDPEGRYEIGQEIVPVDSLKFKDSRKYPDRLKEAMDETGETDAMVVMGGAIHTLPVVAACFEFSFMGGSMGSVVGERFARGAQNALEQHVPFICFTASGGARMQESLLSLMQMAKTTAMLTKLSEAKLPFISVLTDPTMGGVSASFAFLGDVVIAEPKALIGFAGPRVIEQTVREKLPEGFQRAEFLLKTGAIDMIVDRRKMRDEIAQLLALLQRQPADALA.

Residues 27–290 (LWVKCPSCEA…LQRQPADALA (264 aa)) form the CoA carboxyltransferase N-terminal domain. The Zn(2+) site is built by C31, C34, C50, and C53. A C4-type zinc finger spans residues 31 to 53 (CPSCEAVLYRNDVDANLHVCPKC).

It belongs to the AccD/PCCB family. Acetyl-CoA carboxylase is a heterohexamer composed of biotin carboxyl carrier protein (AccB), biotin carboxylase (AccC) and two subunits each of ACCase subunit alpha (AccA) and ACCase subunit beta (AccD). It depends on Zn(2+) as a cofactor.

The protein localises to the cytoplasm. It carries out the reaction N(6)-carboxybiotinyl-L-lysyl-[protein] + acetyl-CoA = N(6)-biotinyl-L-lysyl-[protein] + malonyl-CoA. It participates in lipid metabolism; malonyl-CoA biosynthesis; malonyl-CoA from acetyl-CoA: step 1/1. Its function is as follows. Component of the acetyl coenzyme A carboxylase (ACC) complex. Biotin carboxylase (BC) catalyzes the carboxylation of biotin on its carrier protein (BCCP) and then the CO(2) group is transferred by the transcarboxylase to acetyl-CoA to form malonyl-CoA. The chain is Acetyl-coenzyme A carboxylase carboxyl transferase subunit beta from Burkholderia multivorans (strain ATCC 17616 / 249).